We begin with the raw amino-acid sequence, 258 residues long: Protein SseB (258 aa).

Functionally, may be involved in the enhancement of serine-sensitivity. The protein is Protein SseB (sseB) of Escherichia coli (strain K12).